The following is a 250-amino-acid chain: NAD(P)H-hydrate epimerase (250 aa).

The YjeF N-terminal domain maps to 14 to 238; the sequence is AAALDVELMS…SIAEKYGIQK (225 aa). 74–78 is a (6S)-NADPHX binding site; the sequence is NNGGD. Residues N75 and D143 each coordinate K(+). Residues 147 to 154, Y159, and D180 contribute to the (6S)-NADPHX site; that span reads GFSFHGTA. K(+) is bound at residue S183.

Belongs to the NnrE/AIBP family. K(+) is required as a cofactor.

It carries out the reaction (6R)-NADHX = (6S)-NADHX. The enzyme catalyses (6R)-NADPHX = (6S)-NADPHX. Functionally, catalyzes the epimerization of the S- and R-forms of NAD(P)HX, a damaged form of NAD(P)H that is a result of enzymatic or heat-dependent hydration. This is a prerequisite for the S-specific NAD(P)H-hydrate dehydratase to allow the repair of both epimers of NAD(P)HX. The protein is NAD(P)H-hydrate epimerase of Thalassiosira pseudonana (Marine diatom).